We begin with the raw amino-acid sequence, 574 residues long: MEDSFKNLTIENKEQQTVTTTTTTTTTTTKKIQTLEVPLRRNGDLIEFSDSDEEYYYDDDYEEIEYDSDLSDEENEDRILGIRSSIPLNKTLQPKAQALEQKYQNKINVNSIANSISSKRVIDDDSHRALPNSVQNSIKEIKKKDDKQGVRIVDKEDRATTEQVLDPRTRLMLFKMINKGAFSEINGCISTGKEANVYHAFTPNEEERAVKVYKTSILVFKDRDRYVTGEFRFRRGYSKHNPRKMVKVWAEKEFRNLTRLKNAGIPCPTPLILRNHILVMTFIGKDGYAAPRLKDATVSQEKFGVIYLDCIKMMRTLFHKCRLVHADLSEYNMLYYKNQLYIIDVSQSVEHDHPHSLDFLRMDCSNVTDFFRKKEVNTMFIQELFEFITDLTITEDNIDQYLEKMLEKIQSRGETTDEQKIQEEVFRNAYIPRTLDQIIDLDRDMEKIERGEGRDIFYQNLTGLSKDLQNIKSKNDLINDSNENKDSDDSSSDSSEDSDDDSDSDQLNEDDEKIRKLVVIDPITKMEIRLEDMPKKDRKKFVKEMNKERRKTKIPKHIKKLTKKRKAEKFGKKK.

Residues 171–462 (LMLFKMINKG…GRDIFYQNLT (292 aa)) form the Protein kinase domain. ATP-binding residues include lysine 211 and isoleucine 283. Aspartate 327 (proton acceptor) is an active-site residue. Positions 332 and 344 each coordinate Mg(2+). Catalysis depends on aspartate 344, which acts as the 4-aspartylphosphate intermediate. The segment covering 474 to 488 (KNDLINDSNENKDSD) has biased composition (basic and acidic residues). Disordered regions lie at residues 474–513 (KNDL…DDEK) and 538–574 (RKKF…GKKK). Residues 489-511 (DSSSDSSEDSDDDSDSDQLNEDD) show a composition bias toward acidic residues. A compositionally biased stretch (basic residues) spans 548–574 (ERRKTKIPKHIKKLTKKRKAEKFGKKK).

The protein belongs to the protein kinase superfamily. RIO-type Ser/Thr kinase family. Mg(2+) serves as cofactor.

The protein localises to the cytoplasm. The enzyme catalyses L-seryl-[protein] + ATP = O-phospho-L-seryl-[protein] + ADP + H(+). The catalysed reaction is L-threonyl-[protein] + ATP = O-phospho-L-threonyl-[protein] + ADP + H(+). It carries out the reaction ATP + H2O = ADP + phosphate + H(+). In terms of biological role, required for the final endonucleolytic cleavage at site D converting 20S pre-rRNA into the mature 18S rRNA. Required for the final steps of cytoplasmic maturation of the 40S ribosomal subunit. Despite the protein kinase domain is proposed to act predominantly as an ATPase. The protein is Serine/threonine-protein kinase rio1 (rio1) of Dictyostelium discoideum (Social amoeba).